A 262-amino-acid polypeptide reads, in one-letter code: Shikimate dehydrogenase (NADP(+)) (262 aa).

Shikimate is bound by residues 15 to 17 and threonine 62; that span reads SRS. Lysine 66 functions as the Proton acceptor in the catalytic mechanism. Glutamate 78 serves as a coordination point for NADP(+). Residues asparagine 87 and aspartate 102 each contribute to the shikimate site. Residues 126-130, 150-155, and methionine 214 each bind NADP(+); these read GAGGA and NRTLAR. Residue tyrosine 216 participates in shikimate binding. Glycine 236 is a binding site for NADP(+).

Belongs to the shikimate dehydrogenase family. In terms of assembly, homodimer.

The catalysed reaction is shikimate + NADP(+) = 3-dehydroshikimate + NADPH + H(+). The protein operates within metabolic intermediate biosynthesis; chorismate biosynthesis; chorismate from D-erythrose 4-phosphate and phosphoenolpyruvate: step 4/7. Its function is as follows. Involved in the biosynthesis of the chorismate, which leads to the biosynthesis of aromatic amino acids. Catalyzes the reversible NADPH linked reduction of 3-dehydroshikimate (DHSA) to yield shikimate (SA). This chain is Shikimate dehydrogenase (NADP(+)), found in Acinetobacter baumannii (strain ACICU).